A 305-amino-acid chain; its full sequence is Ornithine carbamoyltransferase (305 aa).

Residues 50-53, Q77, R101, and 128-131 contribute to the carbamoyl phosphate site; these read STRT and HPCQ. Residues N159, D222, and 226–227 contribute to the L-ornithine site; that span reads SM. Carbamoyl phosphate contacts are provided by residues 262–263 and R290; that span reads CL.

It belongs to the aspartate/ornithine carbamoyltransferase superfamily. OTCase family.

It localises to the cytoplasm. It carries out the reaction carbamoyl phosphate + L-ornithine = L-citrulline + phosphate + H(+). It functions in the pathway amino-acid biosynthesis; L-arginine biosynthesis; L-arginine from L-ornithine and carbamoyl phosphate: step 1/3. Functionally, reversibly catalyzes the transfer of the carbamoyl group from carbamoyl phosphate (CP) to the N(epsilon) atom of ornithine (ORN) to produce L-citrulline. In Synechococcus elongatus (strain ATCC 33912 / PCC 7942 / FACHB-805) (Anacystis nidulans R2), this protein is Ornithine carbamoyltransferase.